Reading from the N-terminus, the 223-residue chain is Coiled-coil domain-containing protein 70 (223 aa).

A coiled-coil region spans residues 129-153; the sequence is NALWERDRNLLQEDKALWEEEKALW. The interval 199-223 is disordered; it reads EQRHQNGPYNANEEPQSTSFPRGRA. Polar residues predominate over residues 203–223; the sequence is QNGPYNANEEPQSTSFPRGRA.

The sequence is that of Coiled-coil domain-containing protein 70 from Mus musculus (Mouse).